The chain runs to 414 residues: Chromobox protein homolog 6 (414 aa).

Residues F11–P69 form the Chromo domain. A Phosphoserine modification is found at S107. Disordered regions lie at residues H127–P152, A267–W308, and A344–S365. The segment covering A267–S287 has biased composition (low complexity).

In terms of assembly, component of a PRC1-like complex. Distinct PRC1-like core complexes are composed of a RING1 subunit (RING1B or RING1A), one of the six PCGF proteins (PCGF1-6), one PHC protein (PHC1-3) and one of the CBX proteins (CBX2, CBX4, CBX6, CBX7 or CBX8). Interacts with PCGF1, PCGF2, PCGF3, BMI1, PCGF5, PCGF6, RING1 and RNF2. May interact with H3C15 and H3C1. Interacts (via chromodomain) with single-stranded RNA (ssRNA). Post-translationally, ubiquitinated. Ubiquitination regulates the function of the Polycomb group (PcG) multiprotein PRC1-like complex. Deubiquitinated by USP26. As to expression, expressed in mouse embryonic stem cells.

The protein localises to the nucleus. It is found in the chromosome. Functionally, component of a Polycomb group (PcG) multiprotein PRC1-like complex, a complex class required to maintain the transcriptionally repressive state of many genes, including Hox genes, throughout development. PcG PRC1 complex acts via chromatin remodeling and modification of histones; it mediates monoubiquitination of histone H2A 'Lys-119', rendering chromatin heritably changed in its expressibility. Possibly contributes to the target selectivity of the PRC1 complex by binding specific regions of chromatin. Recruitment to chromatin might occur in an H3K27me3-independent fashion. May have a PRC1-independent function in embryonic stem cells. The protein is Chromobox protein homolog 6 (Cbx6) of Mus musculus (Mouse).